Consider the following 681-residue polypeptide: DNA ligase (681 aa).

NAD(+) contacts are provided by residues 33–37, 83–84, and Glu113; these read DGQFD and SL. The active-site N6-AMP-lysine intermediate is the Lys115. The NAD(+) site is built by Arg136, Glu176, Lys292, and Lys316. 4 residues coordinate Zn(2+): Cys410, Cys413, Cys429, and Cys435. The BRCT domain occupies 599 to 681; sequence SIPRNLEGLS…RALLADGPPA (83 aa).

Belongs to the NAD-dependent DNA ligase family. LigA subfamily. Mg(2+) is required as a cofactor. Requires Mn(2+) as cofactor.

It catalyses the reaction NAD(+) + (deoxyribonucleotide)n-3'-hydroxyl + 5'-phospho-(deoxyribonucleotide)m = (deoxyribonucleotide)n+m + AMP + beta-nicotinamide D-nucleotide.. DNA ligase that catalyzes the formation of phosphodiester linkages between 5'-phosphoryl and 3'-hydroxyl groups in double-stranded DNA using NAD as a coenzyme and as the energy source for the reaction. It is essential for DNA replication and repair of damaged DNA. The polypeptide is DNA ligase (Mycobacteroides abscessus (strain ATCC 19977 / DSM 44196 / CCUG 20993 / CIP 104536 / JCM 13569 / NCTC 13031 / TMC 1543 / L948) (Mycobacterium abscessus)).